Consider the following 1377-residue polypeptide: DNA-directed RNA polymerase subunit beta' (1377 aa).

Zn(2+) is bound by residues Cys70, Cys72, Cys85, and Cys88. Residues Asp460, Asp462, and Asp464 each coordinate Mg(2+). Positions 808, 882, 889, and 892 each coordinate Zn(2+).

It belongs to the RNA polymerase beta' chain family. The RNAP catalytic core consists of 2 alpha, 1 beta, 1 beta' and 1 omega subunit. When a sigma factor is associated with the core the holoenzyme is formed, which can initiate transcription. Mg(2+) serves as cofactor. It depends on Zn(2+) as a cofactor.

The enzyme catalyses RNA(n) + a ribonucleoside 5'-triphosphate = RNA(n+1) + diphosphate. DNA-dependent RNA polymerase catalyzes the transcription of DNA into RNA using the four ribonucleoside triphosphates as substrates. The chain is DNA-directed RNA polymerase subunit beta' from Geotalea daltonii (strain DSM 22248 / JCM 15807 / FRC-32) (Geobacter daltonii).